Consider the following 512-residue polypeptide: Mesoderm induction early response protein 1 (512 aa).

Positions 1 to 16 are enriched in low complexity; it reads MAEPSVESSSPGGSAT. Disordered regions lie at residues 1-63 and 75-173; these read MAEP…REGD and YGST…EDYI. S10 bears the Phosphoserine mark. The segment covering 17 to 36 has biased composition (basic and acidic residues); sequence SDDHEFDPSADMLVHDFDDE. 2 stretches are compositionally biased toward acidic residues: residues 37 to 46 and 83 to 105; these read RTLEEEEMME and EEDE…DNDD. Polar residues predominate over residues 129 to 144; it reads QSSNDDPSQSVASQDA. Phosphoserine is present on S141. At Y155 the chain carries Phosphotyrosine. Phosphoserine occurs at positions 160 and 166. A compositionally biased stretch (acidic residues) spans 160-173; that stretch reads SEVEEESEEDEDYI. One can recognise an ELM2 domain in the interval 180–278; the sequence is KEIMVGSMFQ…EALRRLRFNV (99 aa). The segment at 180-284 is interaction with HDAC1; that stretch reads KEIMVGSMFQ…RFNVKAAREE (105 aa). K239 participates in a covalent cross-link: Glycyl lysine isopeptide (Lys-Gly) (interchain with G-Cter in SUMO2). The region spanning 283-335 is the SANT domain; the sequence is EELSVWTEEECRNFEQGLKAYGKDFHLIQANKVRTRSVGECVAFYYMWKKSER. A disordered region spans residues 366 to 512; it reads ESESAASSRA…KFEELENTDD (147 aa). 3 positions are modified to phosphoserine: S367, S369, and S377. Over residues 396-409 the composition is skewed to polar residues; sequence TVSTANQNGVSSNG. Residues 414–423 are compositionally biased toward basic and acidic residues; it reads LNKEEVKVEG. A Glycyl lysine isopeptide (Lys-Gly) (interchain with G-Cter in SUMO2) cross-link involves residue K420. Residue T448 is modified to Phosphothreonine. A compositionally biased stretch (basic and acidic residues) spans 462–475; sequence ARNENDFDEKSERP. The segment covering 482–494 has biased composition (polar residues); it reads NSNGKESPGSSEF. S483, S488, and S491 each carry phosphoserine.

Interacts with HDAC1. Part of a complex containing at least CDYL, MIER1, MIER2, HDAC1 and HDAC2. As to expression, ubiquitously expressed, but at very low levels. However, consistent level of expression are observed in heart, testis, thyroid, ovary and adrenal gland. Transcripts are up-regulated in breast carcinoma cell lines and tumor.

It localises to the nucleus. It is found in the cytoplasm. In terms of biological role, transcriptional repressor regulating the expression of a number of genes including SP1 target genes. Probably functions through recruitment of HDAC1 a histone deacetylase involved in chromatin silencing. This is Mesoderm induction early response protein 1 (MIER1) from Homo sapiens (Human).